The chain runs to 75 residues: ATP synthase subunit c (75 aa).

2 helical membrane-spanning segments follow: residues 13–33 and 55–75; these read LSVI…GILF and FIGL…ALII.

The protein belongs to the ATPase C chain family. In terms of assembly, F-type ATPases have 2 components, F(1) - the catalytic core - and F(0) - the membrane proton channel. F(1) has five subunits: alpha(3), beta(3), gamma(1), delta(1), epsilon(1). F(0) has three main subunits: a(1), b(2) and c(10-14). The alpha and beta chains form an alternating ring which encloses part of the gamma chain. F(1) is attached to F(0) by a central stalk formed by the gamma and epsilon chains, while a peripheral stalk is formed by the delta and b chains.

The protein resides in the cell membrane. Functionally, f(1)F(0) ATP synthase produces ATP from ADP in the presence of a proton or sodium gradient. F-type ATPases consist of two structural domains, F(1) containing the extramembraneous catalytic core and F(0) containing the membrane proton channel, linked together by a central stalk and a peripheral stalk. During catalysis, ATP synthesis in the catalytic domain of F(1) is coupled via a rotary mechanism of the central stalk subunits to proton translocation. Key component of the F(0) channel; it plays a direct role in translocation across the membrane. A homomeric c-ring of between 10-14 subunits forms the central stalk rotor element with the F(1) delta and epsilon subunits. The chain is ATP synthase subunit c from Bifidobacterium longum (strain DJO10A).